Here is a 400-residue protein sequence, read N- to C-terminus: Argininosuccinate synthase (400 aa).

8–16 (AYSGGLDTS) is a binding site for ATP. Y87 serves as a coordination point for L-citrulline. Residue G117 coordinates ATP. L-aspartate is bound by residues T119, N123, and D124. N123 lines the L-citrulline pocket. The L-citrulline site is built by R127, S175, E260, and Y272.

It belongs to the argininosuccinate synthase family. Type 1 subfamily. As to quaternary structure, homotetramer.

The protein resides in the cytoplasm. The catalysed reaction is L-citrulline + L-aspartate + ATP = 2-(N(omega)-L-arginino)succinate + AMP + diphosphate + H(+). The protein operates within amino-acid biosynthesis; L-arginine biosynthesis; L-arginine from L-ornithine and carbamoyl phosphate: step 2/3. The polypeptide is Argininosuccinate synthase (Nocardia farcinica (strain IFM 10152)).